The following is a 322-amino-acid chain: MGLPSSLESYLLLILLSFLNVSTIYSSKPSKEEAVLFGGNFPAFYVIGDSLVDPGNNNHLPTMIRANYPPYGSDFEGGKATGRFSNGKTIADYIAIYYKLPLVPAYLGLSDDRKDTISTGMNYASAGCGIRRLTGKIAGKCLSLSKQVDLFEETIEKHLKTNFKTPYELREHLAHSLFMTVIGVNDYAFFYTRLTDANDFADELLHKFLKKIEKLHKLGARKFFINNIKPLGCYPNIVAKTFMLGLRGPSTNRYSSNLLNTTGPCCPLDYDGSLTSSCKRRSKTCKAPDSTHIFFDPRHPTQLANFMYSIACFDERTICHVV.

The signal sequence occupies residues 1-26 (MGLPSSLESYLLLILLSFLNVSTIYS). The active-site Nucleophile is Ser50. The N-linked (GlcNAc...) asparagine glycan is linked to Asn260. Catalysis depends on residues Asp296 and His299.

This sequence belongs to the 'GDSL' lipolytic enzyme family.

The protein localises to the secreted. This is GDSL esterase/lipase At2g04020 from Arabidopsis thaliana (Mouse-ear cress).